Reading from the N-terminus, the 5875-residue chain is Probable E3 ubiquitin-protein ligase DDB_G0283893 (5875 aa).

15 disordered regions span residues 17–64 (DNNN…QPPE), 164–185 (NNNN…QSNN), 232–276 (DSNN…TTTS), 302–342 (PSFK…CGNG), 642–693 (TTTT…SPPI), 716–740 (SIRS…TTNA), 1081–1101 (ITPT…TSIP), 1291–1367 (DGWE…KEST), 1806–1851 (QESE…SSPP), 1952–1982 (KKPS…KDEV), 2008–2036 (EDED…DDEE), 2109–2203 (KALK…TGSG), 2893–2930 (DSDD…TNDS), 3083–3119 (TSPS…SGSN), and 3195–3214 (LLPP…DNTN). The span at 18-52 (NNNNNNNNNNNNNNNNNNNNNNNNNNNSNNNNNKN) shows a compositional bias: low complexity. Positions 237 to 249 (DNKENKKEDKESS) are enriched in basic and acidic residues. Low complexity-rich tracts occupy residues 250–276 (KPIA…TTTS), 317–333 (TSTI…ITQP), and 642–656 (TTTT…TTTT). Polar residues predominate over residues 657–669 (NESIPMETTRSST). The span at 670-693 (PIPIVNNNNNNNDSKSNSKKSPPI) shows a compositional bias: low complexity. Positions 716-725 (SIRSSSNKVN) are enriched in polar residues. A compositionally biased stretch (low complexity) spans 728-740 (TPKSSTTTTTTNA). Positions 1297–1330 (FNDDDDEEEDEEEEEEMDEDDSENDEDEDSEESE) are enriched in acidic residues. Positions 1300-1328 (DDDEEEDEEEEEEMDEDDSENDEDEDSEE) form a coiled coil. Composition is skewed to low complexity over residues 1347–1363 (TTTT…TATT) and 1838–1851 (SNSS…SSPP). A compositionally biased stretch (basic residues) spans 1963 to 1977 (GGCHHSNHHHHHHHS). A UBR-type zinc finger spans residues 2042–2113 (KVCTYTFTKN…KGNPCKALKP (72 aa)). 2 stretches are compositionally biased toward low complexity: residues 2118–2168 (PPKQ…TNTN) and 2178–2203 (SSSS…TGSG). Positions 2893–2903 (DSDDSDDEFPT) are enriched in acidic residues. Residues 2908–2917 (VTSSGLSTSA) show a composition bias toward low complexity. Residues 3201–3211 (SSSNENVVDND) show a composition bias toward low complexity. The ZZ-type zinc-finger motif lies at 3226–3280 (EVLFSCDLCNINPITGKRWNCSNCGDFDLCNQCYQNPEKDHPKDHIFKEFIIDEP). The Zn(2+) site is built by Cys3231, Cys3234, Cys3246, Cys3249, Cys3255, Cys3258, His3266, and His3270. Disordered stretches follow at residues 3282–3312 (KDGD…QDDS), 3326–3359 (LNNN…PTTN), and 3754–3776 (SSTS…SNDI). Composition is skewed to low complexity over residues 3295-3307 (QQQK…LQQD) and 3327-3358 (NNNN…TPTT). Residues 3313-3332 (EYDEELKIAISMSLNNNNNN) enclose the UIM domain. Positions 3754–3763 (SSTSQDTQQE) are enriched in polar residues. The segment covering 3764-3774 (SSNNNNNNNSN) has biased composition (low complexity). Residues 4118-4146 (IENQEDHKRAIQTIEKESENAHKKYQRLI) are a coiled coil. Low complexity predominate over residues 4182-4222 (NTSTNSTGSNNQSINSSSGNISTNSSSSSSSSFGISNQSSS). Disordered stretches follow at residues 4182–4237 (NTST…GGVI), 4295–4323 (FISG…RQCP), and 4616–4671 (KILS…FDND). Residues 4223 to 4236 (GNGGGGVGSGGGGV) are compositionally biased toward gly residues. Over residues 4308–4317 (QQQQQQQQQQ) the composition is skewed to low complexity. Positions 4585 to 4618 (QIQQQIALQQQQIQQQIQQQQQQLNESVSGLKIL) form a coiled coil. Composition is skewed to low complexity over residues 4619-4635 (SPSS…ATGS) and 4645-4659 (SSGS…ISSS). The segment at 5357–5870 (PALPFVLVLL…EYLLKLYKSV (514 aa)) is UBR4 E3 catalytic module. Residues 5476–5620 (GFTCMVCREG…WVNLNNISRV (145 aa)) form a HemiRING-type zinc finger. Zn(2+) contacts are provided by Cys5479, Cys5482, His5554, and Cys5557. The region spanning 5623 to 5870 (PKFRILSHDL…EYLLKLYKSV (248 aa)) is the UZI domain. A coiled-coil region spans residues 5819–5846 (QVDVKELLNCFENELKEFQDEMEFFDDE).

Belongs to the UBR4 family.

It functions in the pathway protein modification; protein ubiquitination. In terms of biological role, probable E3 ubiquitin-protein ligase. The chain is Probable E3 ubiquitin-protein ligase DDB_G0283893 from Dictyostelium discoideum (Social amoeba).